Reading from the N-terminus, the 428-residue chain is Probable G-protein coupled receptor (428 aa).

Topologically, residues 1 to 46 (MMADKTSPMITSDHSISNFSTGLFGPHPTVPPDVGVVTSSQSQMKD) are extracellular. The N-linked (GlcNAc...) asparagine glycan is linked to Asn18. Residues 47 to 67 (LFGLFCMVTLNLIALLANTGV) form a helical membrane-spanning segment. Topologically, residues 68–93 (MVAIARAPHLKKFAFVCHLCAVDVLC) are cytoplasmic. Residues 94-114 (AILLMPLGIISSSPFFGTVVF) traverse the membrane as a helical segment. At 115-120 (TILECQ) the chain is on the extracellular side. Residues 121-141 (VYIFLNVFLIWLSILTITAIS) form a helical membrane-spanning segment. Topologically, residues 142–162 (VERYFYIVHPMRYEVKMTINL) are cytoplasmic. The helical transmembrane segment at 163–183 (VIGVMLLIWFKSLLLALVTLF) threads the bilayer. Residues 184 to 210 (GWPPYGHQSSIAASHCSLHASHSRLRG) lie on the Extracellular side of the membrane. The helical transmembrane segment at 211–231 (VFAVLFCVICFLAPVVVIFSV) threads the bilayer. The Cytoplasmic segment spans residues 232 to 293 (YSAVYKVARS…PERAFSGGKA (62 aa)). A helical transmembrane segment spans residues 294–314 (ALTLAFIVGQFLVCWLPFFIF). Residues 315-428 (HLQMSLTGSM…IPGQIPEEQA (114 aa)) lie on the Extracellular side of the membrane. A compositionally biased stretch (polar residues) spans 398-414 (SETHPSFANSNPRNMEN). The segment at 398–428 (SETHPSFANSNPRNMENQAHKIPGQIPEEQA) is disordered.

The protein belongs to the G-protein coupled receptor 1 family.

It localises to the cell membrane. This Oryzias latipes (Japanese rice fish) protein is Probable G-protein coupled receptor.